A 502-amino-acid chain; its full sequence is Cytochrome P450 83A1 (502 aa).

Residues 1–21 traverse the membrane as a helical segment; that stretch reads MEDIIIGVVALAAVLLFFLYQ. Position 442 (cysteine 442) interacts with heme.

This sequence belongs to the cytochrome P450 family. Heme serves as cofactor.

It is found in the endoplasmic reticulum membrane. The enzyme catalyses an (E)-omega-(methylsulfanyl)-alkanal oxime + glutathione + reduced [NADPH--hemoprotein reductase] + O2 = an S-[(1E)-1-(hydroxyimino)-omega-(methylsulfanyl)alkyl]-L-glutathione + oxidized [NADPH--hemoprotein reductase] + 2 H2O + H(+). Involved in the metabolism of aliphatic and aromatic oximes. Involved in the biosynthesis of both short-chain and long-chain aliphatic glucosinolates. The sequence is that of Cytochrome P450 83A1 (CYP83A1) from Arabidopsis thaliana (Mouse-ear cress).